The following is a 485-amino-acid chain: Glutamyl-tRNA(Gln) amidotransferase subunit A (485 aa).

Residues Lys79 and Ser154 each act as charge relay system in the active site. Ser178 functions as the Acyl-ester intermediate in the catalytic mechanism.

The protein belongs to the amidase family. GatA subfamily. Heterotrimer of A, B and C subunits.

The catalysed reaction is L-glutamyl-tRNA(Gln) + L-glutamine + ATP + H2O = L-glutaminyl-tRNA(Gln) + L-glutamate + ADP + phosphate + H(+). Its function is as follows. Allows the formation of correctly charged Gln-tRNA(Gln) through the transamidation of misacylated Glu-tRNA(Gln) in organisms which lack glutaminyl-tRNA synthetase. The reaction takes place in the presence of glutamine and ATP through an activated gamma-phospho-Glu-tRNA(Gln). This chain is Glutamyl-tRNA(Gln) amidotransferase subunit A, found in Desulforamulus reducens (strain ATCC BAA-1160 / DSM 100696 / MI-1) (Desulfotomaculum reducens).